A 392-amino-acid chain; its full sequence is Stilbene synthase 1 (392 aa).

A substrate-binding site is contributed by 55 to 58 (KFNR). Residue cysteine 164 is part of the active site. Substrate is bound by residues leucine 267 and 305–307 (GGP).

This sequence belongs to the thiolase-like superfamily. Chalcone/stilbene synthases family. As to quaternary structure, homodimer. In terms of tissue distribution, in leaves, expressed in palisade and spongy parenchyma cells and, to a lesser extent, in epidermal cells after induction.

It localises to the cytoplasm. It carries out the reaction 4-coumaroyl-CoA + 3 malonyl-CoA + 3 H(+) = trans-resveratrol + 4 CO2 + 4 CoA. Its pathway is phytoalexin biosynthesis; 3,4',5-trihydroxystilbene biosynthesis; 3,4',5-trihydroxystilbene from trans-4-coumarate: step 2/2. Functionally, mediates resistance to pathogens which are sensitive to stilbenes such as Botrytis cinerea, Eutypa lata and Plasmopora viticola by enhancing the production of phytoalexins. Confers resistance to Phytophthora palmivora when expressed in papaya. This chain is Stilbene synthase 1 (VINST1), found in Vitis vinifera (Grape).